The following is a 452-amino-acid chain: tRNA modification GTPase MnmE (452 aa).

The (6S)-5-formyl-5,6,7,8-tetrahydrofolate site is built by Arg-21, Glu-82, and Arg-121. One can recognise a TrmE-type G domain in the interval 214–372 (GARVVLVGRP…LAKTIATTLL (159 aa)). Asn-224 provides a ligand contact to K(+). GTP is bound by residues 224-229 (NVGKSS), 243-249 (TPIPGTT), 268-271 (DTAG), and 353-355 (SAR). Mg(2+) is bound at residue Ser-228. Thr-243, Ile-245, and Thr-248 together coordinate K(+). Residue Thr-249 participates in Mg(2+) binding. Residue Lys-452 coordinates (6S)-5-formyl-5,6,7,8-tetrahydrofolate.

Belongs to the TRAFAC class TrmE-Era-EngA-EngB-Septin-like GTPase superfamily. TrmE GTPase family. In terms of assembly, homodimer. Heterotetramer of two MnmE and two MnmG subunits. K(+) is required as a cofactor.

The protein localises to the cytoplasm. Functionally, exhibits a very high intrinsic GTPase hydrolysis rate. Involved in the addition of a carboxymethylaminomethyl (cmnm) group at the wobble position (U34) of certain tRNAs, forming tRNA-cmnm(5)s(2)U34. This is tRNA modification GTPase MnmE from Chloroflexus aurantiacus (strain ATCC 29366 / DSM 635 / J-10-fl).